The chain runs to 375 residues: Succinyl-diaminopimelate desuccinylase (375 aa).

His-66 provides a ligand contact to Zn(2+). Asp-68 is an active-site residue. Asp-99 lines the Zn(2+) pocket. The active-site Proton acceptor is Glu-133. Residues Glu-134, Glu-162, and His-348 each contribute to the Zn(2+) site.

This sequence belongs to the peptidase M20A family. DapE subfamily. As to quaternary structure, homodimer. It depends on Zn(2+) as a cofactor. The cofactor is Co(2+).

The enzyme catalyses N-succinyl-(2S,6S)-2,6-diaminopimelate + H2O = (2S,6S)-2,6-diaminopimelate + succinate. Its pathway is amino-acid biosynthesis; L-lysine biosynthesis via DAP pathway; LL-2,6-diaminopimelate from (S)-tetrahydrodipicolinate (succinylase route): step 3/3. Catalyzes the hydrolysis of N-succinyl-L,L-diaminopimelic acid (SDAP), forming succinate and LL-2,6-diaminopimelate (DAP), an intermediate involved in the bacterial biosynthesis of lysine and meso-diaminopimelic acid, an essential component of bacterial cell walls. This is Succinyl-diaminopimelate desuccinylase from Escherichia coli O6:K15:H31 (strain 536 / UPEC).